Reading from the N-terminus, the 359-residue chain is Pheromone receptor 1 (359 aa).

7 consecutive transmembrane segments (helical) span residues 5–25 (VTPF…GWHI), 33–53 (ITLS…SVAW), 71–87 (LRHA…LVIA), 110–130 (IIID…LMIV), 147–167 (FLSL…IVSF), 206–226 (LLVL…GSVS), and 268–288 (LILS…MFGL). The interval 335–359 (TSGGIDGSPHSEKFSINTPTKYEEA) is disordered. Polar residues predominate over residues 348–359 (FSINTPTKYEEA).

It belongs to the G-protein coupled receptor 4 family.

It is found in the membrane. Its function is as follows. Receptor for the A2 pheromone, a prenylated mating factor. The chain is Pheromone receptor 1 (PRA1) from Ustilago hordei (Barley covered smut fungus).